We begin with the raw amino-acid sequence, 453 residues long: Potassium/proton antiporter CemA (453 aa).

The next 4 helical transmembrane spans lie at 235–255 (YMAC…IIFL), 328–348 (ICTI…ACLL), 378–398 (ILLL…EIII), and 414–434 (VSCF…YWIF).

It belongs to the CemA family.

It is found in the plastid. Its subcellular location is the chloroplast inner membrane. The catalysed reaction is K(+)(in) + H(+)(out) = K(+)(out) + H(+)(in). Its function is as follows. Contributes to K(+)/H(+) antiport activity by supporting proton efflux to control proton extrusion and homeostasis in chloroplasts in a light-dependent manner to modulate photosynthesis. Prevents excessive induction of non-photochemical quenching (NPQ) under continuous-light conditions. Indirectly promotes efficient inorganic carbon uptake into chloroplasts. This Zygnema circumcarinatum (Green alga) protein is Potassium/proton antiporter CemA.